Reading from the N-terminus, the 274-residue chain is Nitrogenase iron protein (274 aa).

8–15 (GKGGIGKS) lines the ATP pocket. Cysteine 94 contacts [4Fe-4S] cluster. Arginine 97 carries the post-translational modification ADP-ribosylarginine; by dinitrogenase reductase ADP-ribosyltransferase. A [4Fe-4S] cluster-binding site is contributed by cysteine 131.

It belongs to the NifH/BchL/ChlL family. Homodimer. Requires [4Fe-4S] cluster as cofactor. The reversible ADP-ribosylation of Arg-97 inactivates the nitrogenase reductase and regulates nitrogenase activity.

It carries out the reaction N2 + 8 reduced [2Fe-2S]-[ferredoxin] + 16 ATP + 16 H2O = H2 + 8 oxidized [2Fe-2S]-[ferredoxin] + 2 NH4(+) + 16 ADP + 16 phosphate + 6 H(+). Functionally, the key enzymatic reactions in nitrogen fixation are catalyzed by the nitrogenase complex, which has 2 components: the iron protein and the molybdenum-iron protein. This is Nitrogenase iron protein from Azobacteroides pseudotrichonymphae genomovar. CFP2.